We begin with the raw amino-acid sequence, 393 residues long: Probable protein phosphatase 2C 68 (393 aa).

The 304-residue stretch at Asp-56–Ile-359 folds into the PPM-type phosphatase domain. Residues Asp-87, Gly-88, Asp-291, and Asp-350 each coordinate Mn(2+).

It belongs to the PP2C family. Requires Mg(2+) as cofactor. It depends on Mn(2+) as a cofactor.

It catalyses the reaction O-phospho-L-seryl-[protein] + H2O = L-seryl-[protein] + phosphate. The catalysed reaction is O-phospho-L-threonyl-[protein] + H2O = L-threonyl-[protein] + phosphate. Its function is as follows. May dephosphorylate and repress plasma membrane H(+)-ATPases (PM H(+)-ATPases, e.g. AHA1 and AHA2), thus influencing negatively plant growth and fitness. The chain is Probable protein phosphatase 2C 68 from Arabidopsis thaliana (Mouse-ear cress).